The primary structure comprises 1135 residues: LRR receptor-like serine/threonine-protein kinase RGI2 (1135 aa).

The N-terminal stretch at M1 to A35 is a signal peptide. Residues S36 to R723 are Extracellular-facing. C69 and C76 are joined by a disulfide. N101 and N117 each carry an N-linked (GlcNAc...) asparagine glycan. LRR repeat units lie at residues F105–C129, S130–L153, K154–C177, and S179–T203. Short sequence motifs (small peptide recognition) lie at residues F186–D187, R208–G211, V231–A236, and Y259. LRR repeat units follow at residues C226–L250, S251–C274, E276–L298, Q299–K323, L325–N345, L346–C370, K372–K395, L397–C418, Q419–L442, N444–C466, T467–L490, Q491–C514, Q516–L538, T539–L562, S564–C586, T587–I610, D612–A634, L635–L658, and E659–Q683. The N-linked (GlcNAc...) asparagine glycan is linked to N273. A Small peptide recognition motif is present at residues F281 to Y283. The Small peptide recognition signature appears at D329–M332. A glycan (N-linked (GlcNAc...) asparagine) is linked at N345. Positions E351 to M353 match the Small peptide recognition motif. N358 and N369 each carry an N-linked (GlcNAc...) asparagine glycan. 2 short sequence motifs (small peptide recognition) span residues I399–W403 and D425–Q428. A glycan (N-linked (GlcNAc...) asparagine) is linked at N444. Residues K447–I451 carry the Small peptide recognition motif. The N-linked (GlcNAc...) asparagine glycan is linked to N465. The Small peptide recognition motif lies at R471–R473. N-linked (GlcNAc...) asparagine glycans are attached at residues N492, N502, N521, and N524. N598 and N618 each carry an N-linked (GlcNAc...) asparagine glycan. 2 N-linked (GlcNAc...) asparagine glycosylation sites follow: N665 and N707. The chain crosses the membrane as a helical span at residues I724 to V744. Over I745 to K1135 the chain is Cytoplasmic. Residue T777 is modified to Phosphothreonine. The Protein kinase domain occupies L785–I1066. Residues I791–V799 and K813 each bind ATP. Y868 and Y907 each carry phosphotyrosine. Residue D920 is the Proton acceptor of the active site. Phosphotyrosine occurs at positions 963 and 970. The disordered stretch occupies residues D1077–K1135. Residues S1108 to S1128 show a composition bias toward low complexity.

The protein belongs to the protein kinase superfamily. Ser/Thr protein kinase family. As to quaternary structure, binds to RGF peptides such as RGF1, GLV5/CLEL1/RGF2, GLV7/CLEL3/RGF3, GLV3/RGF4, GLV10/CLEL7/RGF5 and RGF10/CLELN; these interactions trigger the formation of heterodimers with SERK1. Interacts with UBP13. Post-translationally, phosphorylated and ubiquitinated upon interaction with RGF1, thus leading to activation a subsequent degradation. Stabilized by UBP12 and UBP13-mediated deubiquitination. In terms of processing, autophosphorylated. As to expression, specific to root meristems, especially in lateral root meristems (LRM).

It localises to the membrane. It catalyses the reaction L-seryl-[protein] + ATP = O-phospho-L-seryl-[protein] + ADP + H(+). The catalysed reaction is L-threonyl-[protein] + ATP = O-phospho-L-threonyl-[protein] + ADP + H(+). In terms of biological role, together with RGI1, RGI3, RGI4 and RGI5, acts as a receptor of RGF peptides (e.g. RGF1, GLV5/CLEL1/RGF2, GLV7/CLEL3/RGF3, GLV3/RGF4, GLV10/CLEL7/RGF5 and RGF10/CLELN), peptide hormones which maintain the postembryonic root stem cell niche by regulating the expression levels and patterns of the transcription factor PLETHORA (PLT, e.g. PLT1 and PLT2). Links RGF peptides signal with their downstream components. In Arabidopsis thaliana (Mouse-ear cress), this protein is LRR receptor-like serine/threonine-protein kinase RGI2.